A 155-amino-acid polypeptide reads, in one-letter code: Endoribonuclease YbeY (155 aa).

H114, H118, and H124 together coordinate Zn(2+).

Belongs to the endoribonuclease YbeY family. Requires Zn(2+) as cofactor.

The protein resides in the cytoplasm. Single strand-specific metallo-endoribonuclease involved in late-stage 70S ribosome quality control and in maturation of the 3' terminus of the 16S rRNA. The sequence is that of Endoribonuclease YbeY from Escherichia coli O17:K52:H18 (strain UMN026 / ExPEC).